Consider the following 519-residue polypeptide: Cytochrome P450 4A22 (519 aa).

Residues 1 to 4 constitute a propeptide that is removed on maturation; sequence MSVS. Residue E321 participates in heme binding. At S440 the chain carries Phosphoserine. C457 provides a ligand contact to heme.

Belongs to the cytochrome P450 family.

The protein resides in the endoplasmic reticulum membrane. It is found in the microsome membrane. The enzyme catalyses an omega-methyl-long-chain fatty acid + reduced [NADPH--hemoprotein reductase] + O2 = an omega-hydroxy-long-chain fatty acid + oxidized [NADPH--hemoprotein reductase] + H2O + H(+). In terms of biological role, catalyzes the omega- and (omega-1)-hydroxylation of various fatty acids such as laurate and palmitate. Shows no activity towards arachidonic acid and prostaglandin A1. Lacks functional activity in the kidney and does not contribute to renal 20-hydroxyeicosatetraenoic acid (20-HETE) biosynthesis. The sequence is that of Cytochrome P450 4A22 (CYP4A22) from Homo sapiens (Human).